Here is a 347-residue protein sequence, read N- to C-terminus: D-alanine--D-alanine ligase (347 aa).

The ATP-grasp domain maps to Lys131 to Asp333. Glu161–Glu216 serves as a coordination point for ATP. 3 residues coordinate Mg(2+): Asp287, Glu300, and Asn302.

It belongs to the D-alanine--D-alanine ligase family. Mg(2+) is required as a cofactor. The cofactor is Mn(2+).

The protein localises to the cytoplasm. It catalyses the reaction 2 D-alanine + ATP = D-alanyl-D-alanine + ADP + phosphate + H(+). Its pathway is cell wall biogenesis; peptidoglycan biosynthesis. Its function is as follows. Cell wall formation. The polypeptide is D-alanine--D-alanine ligase (Streptococcus pneumoniae (strain CGSP14)).